The primary structure comprises 691 residues: Elongation factor G (691 aa).

One can recognise a tr-type G domain in the interval 8–283; that stretch reads EDYRNFGIMA…AVVDYLPTPI (276 aa). GTP is bound by residues 17–24, 81–85, and 135–138; these read AHIDAGKT, DTPGH, and NKMD.

It belongs to the TRAFAC class translation factor GTPase superfamily. Classic translation factor GTPase family. EF-G/EF-2 subfamily.

The protein localises to the cytoplasm. Its function is as follows. Catalyzes the GTP-dependent ribosomal translocation step during translation elongation. During this step, the ribosome changes from the pre-translocational (PRE) to the post-translocational (POST) state as the newly formed A-site-bound peptidyl-tRNA and P-site-bound deacylated tRNA move to the P and E sites, respectively. Catalyzes the coordinated movement of the two tRNA molecules, the mRNA and conformational changes in the ribosome. This is Elongation factor G from Beijerinckia indica subsp. indica (strain ATCC 9039 / DSM 1715 / NCIMB 8712).